The primary structure comprises 117 residues: Glycoprotein hormones alpha chain (117 aa).

A signal peptide spans 1 to 23; that stretch reads MGSVKSAGLSLLLLSFLLYVADS. 5 disulfide bridges follow: Cys-34–Cys-57, Cys-37–Cys-86, Cys-54–Cys-107, Cys-58–Cys-109, and Cys-85–Cys-112. Residues Asn-78 and Asn-103 are each glycosylated (N-linked (GlcNAc...) asparagine).

It belongs to the glycoprotein hormones subunit alpha family. In terms of assembly, heterodimer. Glycoprotein hormones are heterodimers composed of a common alpha chain described here and a unique beta chain which confers their biological specificity to the different hormones.

The protein resides in the secreted. In terms of biological role, shared alpha chain of heterodimeric glycoprotein hormones. These hormones bind specific receptors on target cells that in turn activate downstream signaling pathways. Involved in gametogenesis and steroidogenesis. This Acanthopagrus latus (Yellowfin seabream) protein is Glycoprotein hormones alpha chain (cga).